We begin with the raw amino-acid sequence, 506 residues long: 7,8-dihydro-6-hydroxymethylpterin dimethyltransferase (506 aa).

Residues Cys-73, Cys-77, Cys-80, Cys-98, Cys-102, and Cys-105 each coordinate [4Fe-4S] cluster. Residues 82 to 300 (NHKSTTILAN…FIKLVEEQTD (219 aa)) enclose the Radical SAM core domain.

It belongs to the radical SAM superfamily. The cofactor is [4Fe-4S] cluster. It depends on S-adenosyl-L-methionine as a cofactor.

It functions in the pathway cofactor biosynthesis; 5,6,7,8-tetrahydromethanopterin biosynthesis. In terms of biological role, is responsible for the addition of methyl groups at C-7 and C-9 of the pterin ring during methanopterin (MPT) biosynthesis. Catalyzes methylation of 7,8-dihydro-6-hydroxymethylpterin, likely using methylenetetrahydromethanopterin as a methyl group donor, via a radical-based mechanism. The protein is 7,8-dihydro-6-hydroxymethylpterin dimethyltransferase of Methanocaldococcus jannaschii (strain ATCC 43067 / DSM 2661 / JAL-1 / JCM 10045 / NBRC 100440) (Methanococcus jannaschii).